We begin with the raw amino-acid sequence, 88 residues long: Cell division topological specificity factor (88 aa).

The protein belongs to the MinE family.

Prevents the cell division inhibition by proteins MinC and MinD at internal division sites while permitting inhibition at polar sites. This ensures cell division at the proper site by restricting the formation of a division septum at the midpoint of the long axis of the cell. This is Cell division topological specificity factor from Clostridium novyi (strain NT).